Consider the following 54-residue polypeptide: Putative neurotoxin-I (54 aa).

Intrachain disulfides connect Cys20–Cys42, Cys28–Cys51, and Cys32–Cys53.

As to expression, expressed by the venom gland.

The protein localises to the secreted. This chain is Putative neurotoxin-I, found in Lychas mucronatus (Chinese swimming scorpion).